The chain runs to 303 residues: Hemolysin E (303 aa).

Cys-87 and Cys-285 form a disulfide bridge. Residues Ala-183–Val-203 traverse the membrane as a helical segment.

It belongs to the hemolysin E family. Monomer and oligomer. In periplasm, it is present as a monomer, while in outer membrane vesicles, it oligomerizes to form a pore structure that is active. The pore is formed by a dodecamer. In terms of processing, in periplasm, it forms a disulfide bond, which prevents the oligomerization. In outer membrane vesicles, the redox status prevents formation of the disulfide bond, leading to oligomerization and pore formation.

The protein localises to the secreted. It localises to the periplasm. Its subcellular location is the host cell membrane. Toxin, which has some hemolytic activity towards mammalian cells. Acts by forming a pore-like structure upon contact with mammalian cells. The chain is Hemolysin E (hlyE) from Escherichia coli O157:H7.